The primary structure comprises 150 residues: Large ribosomal subunit protein bL9 (150 aa).

It belongs to the bacterial ribosomal protein bL9 family.

Functionally, binds to the 23S rRNA. The protein is Large ribosomal subunit protein bL9 of Burkholderia vietnamiensis (strain G4 / LMG 22486) (Burkholderia cepacia (strain R1808)).